The chain runs to 246 residues: MSTLKVVSSKLAAEIDKELMGPQIGFTLQQLMELAGFSVAQAVCRQFPLRGKTETEKGKHVFVIAGPGNNGGDGLVCARHLKLFGYNPVVFYPKRSERTEFYKQLVHQLNFFKVPVLSQDEGNWLEYLKPEKTLCIVDAIFGFSFKPPMREPFKGIVEELCKVQNIIPIVSVDVPTGWDVDKGPISQPSINPAVLVSLTVPKPCSSHIRENQTTHYVGGRFIPRDFANKFGFEPFGYESTDQILKL.

The YjeF N-terminal domain occupies 12-234; that stretch reads AAEIDKELMG…DFANKFGFEP (223 aa). (6S)-NADPHX is bound at residue 69–73; that stretch reads NNGGD. Residues Asn-70 and Asp-138 each contribute to the K(+) site. Residues 142–148 and Asp-173 contribute to the (6S)-NADPHX site; that span reads GFSFKPP. Thr-176 serves as a coordination point for K(+).

It belongs to the NnrE/AIBP family. The cofactor is K(+).

Its subcellular location is the cytoplasm. The protein localises to the mitochondrion. The catalysed reaction is (6R)-NADHX = (6S)-NADHX. It catalyses the reaction (6R)-NADPHX = (6S)-NADPHX. Catalyzes the epimerization of the S- and R-forms of NAD(P)HX, a damaged form of NAD(P)H that is a result of enzymatic or heat-dependent hydration. This is a prerequisite for the S-specific NAD(P)H-hydrate dehydratase to allow the repair of both epimers of NAD(P)HX. The chain is NAD(P)H-hydrate epimerase from Saccharomyces cerevisiae (strain ATCC 204508 / S288c) (Baker's yeast).